Here is a 445-residue protein sequence, read N- to C-terminus: Chromosome partition protein MukF (445 aa).

Residues 213 to 241 (LSETSATLRELQDTLQAAGDELQTQILDI) are leucine-zipper.

The protein belongs to the MukF family. In terms of assembly, interacts, and probably forms a ternary complex, with MukE and MukB via its C-terminal region. The complex formation is stimulated by calcium or magnesium. It is required for an interaction between MukE and MukB.

The protein localises to the cytoplasm. The protein resides in the nucleoid. Its function is as follows. Involved in chromosome condensation, segregation and cell cycle progression. May participate in facilitating chromosome segregation by condensation DNA from both sides of a centrally located replisome during cell division. Not required for mini-F plasmid partitioning. Probably acts via its interaction with MukB and MukE. Overexpression results in anucleate cells. It has a calcium binding activity. The protein is Chromosome partition protein MukF of Vibrio cholerae serotype O1 (strain ATCC 39541 / Classical Ogawa 395 / O395).